The following is a 164-amino-acid chain: MHAFFPRLLLLLLFLPLTHCTYLPSLPYKIDIQQGNVVTDEMVAKLKPGMTRSQVRFTLGTPLVMDIFHGDRWDYIYRTAPGGRVAEEKKLTVFFQDDRLSHIQGDFPQPPAFSESEPAQNFFSPEQTFTPAPDTDSNMNEEPDKKGTVNFLKENQTNFYKDNQ.

The signal sequence occupies residues 1–19; the sequence is MHAFFPRLLLLLLFLPLTH. The disordered stretch occupies residues 111–164; it reads PAFSESEPAQNFFSPEQTFTPAPDTDSNMNEEPDKKGTVNFLKENQTNFYKDNQ. Composition is skewed to polar residues over residues 117-140 and 153-164; these read EPAQ…SNMN and KENQTNFYKDNQ.

The protein belongs to the BamE family. As to quaternary structure, part of the Bam complex.

The protein resides in the cell outer membrane. In terms of biological role, part of the outer membrane protein assembly complex, which is involved in assembly and insertion of beta-barrel proteins into the outer membrane. This is Outer membrane protein assembly factor BamE from Nitrosomonas europaea (strain ATCC 19718 / CIP 103999 / KCTC 2705 / NBRC 14298).